We begin with the raw amino-acid sequence, 876 residues long: Extended synaptotagmin-2-B (876 aa).

Positions 1 to 21 (MASESGAEKGPPTTPAENGQP) are disordered. The Cytoplasmic portion of the chain corresponds to 1–35 (MASESGAEKGPPTTPAENGQPGVPIAAAVAADEQG). The chain crosses the membrane as a helical span at residues 36-56 (MISVDIAGLFYQFSKTFILIF). At 57–59 (PVY) the chain is on the lumenal side. A helical transmembrane segment spans residues 60-80 (VLGYFGLSFSWLLIALVLLLW). The Cytoplasmic segment spans residues 81–876 (WRRNKGNKNS…EDGTRAAASS (796 aa)). The SMP-LTD domain maps to 123–302 (DIERAEWLNK…LPNRITVPLV (180 aa)). 2 C2 domains span residues 301 to 421 (LVSD…DEWF) and 446 to 592 (NLDQ…HLNN). Ca(2+)-binding residues include K332, D333, D345, D392, E393, D394, D396, D398, and D399. The tract at residues 614–714 (VRSPDEQHTS…KEPTPSIASD (101 aa)) is disordered. Over residues 636–656 (PPTPQMPAPSPAVAHKPPPTP) the composition is skewed to pro residues. Over residues 686-698 (SSSSLSGSSFTYS) the composition is skewed to low complexity. The C2 3 domain occupies 741–863 (PLGQIQLTIR…DAAKGWTQWF (123 aa)). Residues 788-795 (KRRSGRRK) are required for phosphatidylinositol 4,5-bisphosphate-dependent location at the cell membrane.

Belongs to the extended synaptotagmin family. Interacts with fgfr1 that has been activated by fgf1 binding. Interacts (via C2 domains) with the AP-2 complex (via an alpha subunit). Identified in a complex with the AP-2 complex and fgfr1.

Its subcellular location is the cell membrane. It localises to the endoplasmic reticulum membrane. In terms of biological role, tethers the endoplasmic reticulum to the cell membrane and promotes the formation of appositions between the endoplasmic reticulum and the cell membrane. Binds glycerophospholipids in a barrel-like domain and may play a role in cellular lipid transport. Plays a role in the rapid internalization of fgfr1 that has been activated by fgf1 binding; this occurs most likely via the AP-2 complex. Required for normal fgf signaling and the activation of downstream signaling cascades via its role in the internalization of activated fgfr1. Required for normal embryonic development via its role in fgf signaling and the downstream regulation of t/xBRA expression. The polypeptide is Extended synaptotagmin-2-B (esyt2-b) (Xenopus laevis (African clawed frog)).